Reading from the N-terminus, the 278-residue chain is Biotin synthase (278 aa).

One can recognise a Radical SAM core domain in the interval 1 to 227; it reads MQIMLCAISN…QSVVMVAGGR (227 aa). Cys16, Cys20, and Cys23 together coordinate [4Fe-4S] cluster. Residues Cys60, Cys95, and Cys153 each contribute to the [2Fe-2S] cluster site.

The protein belongs to the radical SAM superfamily. Biotin synthase family. Homodimer. [4Fe-4S] cluster is required as a cofactor. The cofactor is [2Fe-2S] cluster.

The catalysed reaction is (4R,5S)-dethiobiotin + (sulfur carrier)-SH + 2 reduced [2Fe-2S]-[ferredoxin] + 2 S-adenosyl-L-methionine = (sulfur carrier)-H + biotin + 2 5'-deoxyadenosine + 2 L-methionine + 2 oxidized [2Fe-2S]-[ferredoxin]. Its pathway is cofactor biosynthesis; biotin biosynthesis; biotin from 7,8-diaminononanoate: step 2/2. Its function is as follows. Catalyzes the conversion of dethiobiotin (DTB) to biotin by the insertion of a sulfur atom into dethiobiotin via a radical-based mechanism. The chain is Biotin synthase from Campylobacter jejuni (strain RM1221).